Reading from the N-terminus, the 62-residue chain is Small ribosomal subunit protein uS14 (62 aa).

The Zn(2+) site is built by Cys-25, Cys-28, Cys-41, and Cys-44.

The protein belongs to the universal ribosomal protein uS14 family. Zinc-binding uS14 subfamily. In terms of assembly, part of the 30S ribosomal subunit. Contacts proteins S3 and S10. Requires Zn(2+) as cofactor.

Functionally, binds 16S rRNA, required for the assembly of 30S particles and may also be responsible for determining the conformation of the 16S rRNA at the A site. This chain is Small ribosomal subunit protein uS14, found in Aquifex aeolicus (strain VF5).